Reading from the N-terminus, the 143-residue chain is Large ribosomal subunit protein uL11 (143 aa).

Belongs to the universal ribosomal protein uL11 family. As to quaternary structure, part of the ribosomal stalk of the 50S ribosomal subunit. Interacts with L10 and the large rRNA to form the base of the stalk. L10 forms an elongated spine to which L12 dimers bind in a sequential fashion forming a multimeric L10(L12)X complex. Post-translationally, one or more lysine residues are methylated.

Its function is as follows. Forms part of the ribosomal stalk which helps the ribosome interact with GTP-bound translation factors. The polypeptide is Large ribosomal subunit protein uL11 (Clavibacter michiganensis subsp. michiganensis (strain NCPPB 382)).